A 321-amino-acid polypeptide reads, in one-letter code: Glucokinase (321 aa).

8-13 (GDVGGT) is a binding site for ATP.

The protein belongs to the bacterial glucokinase family.

The protein resides in the cytoplasm. The catalysed reaction is D-glucose + ATP = D-glucose 6-phosphate + ADP + H(+). This chain is Glucokinase, found in Salmonella agona (strain SL483).